Consider the following 549-residue polypeptide: Cation/acetate symporter ActP (549 aa).

Residues 1-32 (MKRVLTALAATLPFAANAADAISGAVERQPTN) are Periplasmic-facing. The helical transmembrane segment at 33–55 (WQAIIMFLIFVVFTLGITYWASK) threads the bilayer. The Cytoplasmic segment spans residues 56-75 (RVRSRNDYYTAGGNITGFQN). A helical membrane pass occupies residues 76–98 (GLAIAGDYMSAASFLGISALVFT). The Periplasmic portion of the chain corresponds to 99-102 (SGYD). The helical transmembrane segment at 103-125 (GLIYSLGFLVGWPIILFLIAERL) threads the bilayer. Over 126–145 (RNLGRYTFADVASYRLKQGP) the chain is Cytoplasmic. A helical membrane pass occupies residues 146 to 168 (IRILSACGSLVVVALYLIAQMVG). At 169-182 (AGKLIELLFGLNYH) the chain is on the periplasmic side. A helical membrane pass occupies residues 183 to 205 (IAVVLVGVLMMMYVLFGGMLATT). Residues 206-211 (WVQIIK) are Cytoplasmic-facing. Residues 212–234 (AVLLLFGASFMAFMVMKHVGFSF) form a helical membrane-spanning segment. Residues 235 to 263 (NNLFSEAMAVHPKGVDIMKPGGLVKDPIS) are Periplasmic-facing. The helical transmembrane segment at 264–286 (ALSLGLGLMFGTAGLPHILMHFF) threads the bilayer. Topologically, residues 287–297 (TVSDAREARKS) are cytoplasmic. The helical transmembrane segment at 298-320 (VFYATGFMGYFYILTFIIGFGAI) threads the bilayer. At 321-358 (MLVGANPEYKDAAGHLIGGNNMAAVHLANAVGGNLFLG) the chain is on the periplasmic side. The chain crosses the membrane as a helical span at residues 359 to 381 (FISAVAFATILAVVAGLTLAGAS). Topologically, residues 382–401 (AVSHDLYANVFKKGATEREE) are cytoplasmic. A helical transmembrane segment spans residues 402-424 (LRVSKITVLILGVIAIILGVLFE). At 425–427 (NQN) the chain is on the periplasmic side. The helical transmembrane segment at 428-450 (IAFMVGLAFAIAASCNFPIILLS) threads the bilayer. The Cytoplasmic portion of the chain corresponds to 451-461 (MYWSKLTTRGA). The helical transmembrane segment at 462 to 484 (MLGGWLGLITAVVLMILGPTIWV) threads the bilayer. Residues 485–493 (QILGHEKAI) are Periplasmic-facing. The helical transmembrane segment at 494 to 516 (FPYEYPALFSISVAFLGIWLFSA) threads the bilayer. Topologically, residues 517–549 (TDNSAEGARERELFRAQFIRSQTGFGVEQGRAH) are cytoplasmic.

Belongs to the sodium:solute symporter (SSF) (TC 2.A.21) family.

It localises to the cell inner membrane. In terms of biological role, transports acetate. This Escherichia coli O6:H1 (strain CFT073 / ATCC 700928 / UPEC) protein is Cation/acetate symporter ActP (actP).